Consider the following 252-residue polypeptide: Large ribosomal subunit protein uL4 (252 aa).

This sequence belongs to the universal ribosomal protein uL4 family. Part of the 50S ribosomal subunit.

Functionally, one of the primary rRNA binding proteins, this protein initially binds near the 5'-end of the 23S rRNA. It is important during the early stages of 50S assembly. It makes multiple contacts with different domains of the 23S rRNA in the assembled 50S subunit and ribosome. Forms part of the polypeptide exit tunnel. The protein is Large ribosomal subunit protein uL4 of Methanococcus maripaludis (strain C6 / ATCC BAA-1332).